The following is a 393-amino-acid chain: Tryptophan synthase beta chain (393 aa).

Residue Lys-85 is modified to N6-(pyridoxal phosphate)lysine.

This sequence belongs to the TrpB family. In terms of assembly, tetramer of two alpha and two beta chains. The cofactor is pyridoxal 5'-phosphate.

The catalysed reaction is (1S,2R)-1-C-(indol-3-yl)glycerol 3-phosphate + L-serine = D-glyceraldehyde 3-phosphate + L-tryptophan + H2O. It participates in amino-acid biosynthesis; L-tryptophan biosynthesis; L-tryptophan from chorismate: step 5/5. In terms of biological role, the beta subunit is responsible for the synthesis of L-tryptophan from indole and L-serine. The polypeptide is Tryptophan synthase beta chain (trpB) (Helicobacter pylori (strain ATCC 700392 / 26695) (Campylobacter pylori)).